A 269-amino-acid chain; its full sequence is MTIVSGHIGKHPSLTTVQAGSSASVENQMPDPAQFSDGRWKKLPTQLSSITLARFDQNICTNNHGISQRAMCFGLSLSWINMIHAGKDHVTPYASAERMRFLGSFEGVVHARTVHNFYRTEHKFLMEQASANPGVSSGAMAGTESLLQAAELKGLKLQPVLEDKSNSGLPFLIACKQSGRQVSTDEAALSSLCDAIVENKRGVMVIYSQEIAHALGFSVSSDGKRATLFDPNLGEFHTHSKALADTIENISSADGLPLIGVQVFASKIH.

Residues 1–39 form a disordered region; the sequence is MTIVSGHIGKHPSLTTVQAGSSASVENQMPDPAQFSDGR. Over residues 13–27 the composition is skewed to polar residues; the sequence is SLTTVQAGSSASVEN. Catalysis depends on residues C72, H213, and D230.

It belongs to the peptidase C58 family.

Its function is as follows. Potential cysteine protease. Avirulence protein, which may be essential during infection of plant cells from Pea and some Arabidopsis thaliana cultivars. May act by affecting the plant defense system. In plants lacking appropriate resistance (R) gene, it probably impairs the plant defense system and leads to the bacteria multiplication. In contrast, in plants containing the appropriate R protein, it is unable to induce disease symptoms, explaining its avirulence name. This chain is Probable cysteine protease avirulence protein AvrPpiC2 (avrPpiC2), found in Pseudomonas syringae pv. pisi.